A 262-amino-acid chain; its full sequence is Thiazole synthase (262 aa).

Lys97 (schiff-base intermediate with DXP) is an active-site residue. Residues Gly158, 185–186 (AG), and 207–208 (NT) contribute to the 1-deoxy-D-xylulose 5-phosphate site. The disordered stretch occupies residues 243–262 (DKAQASTPTVGQPFWHSAEY).

This sequence belongs to the ThiG family. As to quaternary structure, homotetramer. Forms heterodimers with either ThiH or ThiS.

The protein localises to the cytoplasm. The enzyme catalyses [ThiS sulfur-carrier protein]-C-terminal-Gly-aminoethanethioate + 2-iminoacetate + 1-deoxy-D-xylulose 5-phosphate = [ThiS sulfur-carrier protein]-C-terminal Gly-Gly + 2-[(2R,5Z)-2-carboxy-4-methylthiazol-5(2H)-ylidene]ethyl phosphate + 2 H2O + H(+). It functions in the pathway cofactor biosynthesis; thiamine diphosphate biosynthesis. Its function is as follows. Catalyzes the rearrangement of 1-deoxy-D-xylulose 5-phosphate (DXP) to produce the thiazole phosphate moiety of thiamine. Sulfur is provided by the thiocarboxylate moiety of the carrier protein ThiS. In vitro, sulfur can be provided by H(2)S. The chain is Thiazole synthase from Neisseria meningitidis serogroup B (strain ATCC BAA-335 / MC58).